The primary structure comprises 140 residues: Short-chain diamines transporter (140 aa).

The next 4 helical transmembrane spans lie at 7 to 27, 36 to 56, 79 to 99, and 105 to 125; these read IFHA…AAAL, LALV…IYNL, VGFE…FLEI, and LMLE…FNWL.

It belongs to the proteobacterial antimicrobial compound efflux (PACE) (TC 2.A.117) family.

The protein localises to the cell inner membrane. Functionally, mediates the efflux of short-chain diamines when energized by an electrochemical gradient. Confers resistance to chlorhexidine, benzalkonium, proflavine and acriflavine. Mediates efflux of both proflavine and acriflavine via an energy-dependent mechanism. The sequence is that of Short-chain diamines transporter from Vibrio parahaemolyticus serotype O3:K6 (strain RIMD 2210633).